The primary structure comprises 157 residues: SsrA-binding protein (157 aa).

This sequence belongs to the SmpB family.

Its subcellular location is the cytoplasm. Required for rescue of stalled ribosomes mediated by trans-translation. Binds to transfer-messenger RNA (tmRNA), required for stable association of tmRNA with ribosomes. tmRNA and SmpB together mimic tRNA shape, replacing the anticodon stem-loop with SmpB. tmRNA is encoded by the ssrA gene; the 2 termini fold to resemble tRNA(Ala) and it encodes a 'tag peptide', a short internal open reading frame. During trans-translation Ala-aminoacylated tmRNA acts like a tRNA, entering the A-site of stalled ribosomes, displacing the stalled mRNA. The ribosome then switches to translate the ORF on the tmRNA; the nascent peptide is terminated with the 'tag peptide' encoded by the tmRNA and targeted for degradation. The ribosome is freed to recommence translation, which seems to be the essential function of trans-translation. This chain is SsrA-binding protein, found in Lacticaseibacillus paracasei (strain ATCC 334 / BCRC 17002 / CCUG 31169 / CIP 107868 / KCTC 3260 / NRRL B-441) (Lactobacillus paracasei).